The following is a 338-amino-acid chain: NADPH dehydrogenase (338 aa).

23-26 (SPMC) contributes to the FMN binding site. Substrate is bound at residue Tyr28. FMN is bound by residues Ala60 and Gln102. 164–167 (HGAH) lines the substrate pocket. FMN is bound by residues Arg215 and 307 to 308 (GR).

The protein belongs to the NADH:flavin oxidoreductase/NADH oxidase family. NamA subfamily. Homotetramer. FMN is required as a cofactor.

The catalysed reaction is A + NADPH + H(+) = AH2 + NADP(+). In terms of biological role, catalyzes the reduction of the double bond of an array of alpha,beta-unsaturated aldehydes and ketones. It also reduces the nitro group of nitroester and nitroaromatic compounds. It could have a role in detoxification processes. In Bacillus pumilus (strain SAFR-032), this protein is NADPH dehydrogenase.